Reading from the N-terminus, the 584-residue chain is HERV-H_2q24.3 provirus ancestral Env polyprotein (584 aa).

The first 35 residues, 1–35 (MIFAGKAPSNTSTLMKFYSLLLYSLLFSFPFLCHP), serve as a signal peptide directing secretion. At 36–523 (LPLPSYLHHT…WALSNWMSWV (488 aa)) the chain is on the extracellular side. Residue N47 is glycosylated (N-linked (GlcNAc...) asparagine). The CXXC signature appears at 64-67 (CWLC). N199, N222, N265, N283, N352, and N370 each carry an N-linked (GlcNAc...) asparagine glycan. Residues 388–408 (VIPLIPLMVGLGLSASTVALG) are fusion peptide. The CKS-17 motif lies at 454-470 (LQNRRGLDLLTAEKGGL). A disulfide bridge links C471 with C478. Residues 471–479 (CIFLNEECC) carry the CX6CC motif. N483 is a glycosylation site (N-linked (GlcNAc...) asparagine). Residues 524 to 544 (LPIVSPLIPIFLLLLFGPCIF) traverse the membrane as a helical segment. Topologically, residues 545 to 584 (RLVSQFIQNRIQAITNHSIRQMFLLTSPQYHPLPQDLPSA) are cytoplasmic.

It belongs to the gamma type-C retroviral envelope protein family. HERV class-I H env subfamily. The surface (SU) and transmembrane (TM) proteins form a heterodimer. SU and TM are attached by noncovalent interactions or by a labile interchain disulfide bond. In terms of processing, specific enzymatic cleavages in vivo yield the mature SU and TM proteins. The CXXC motif is highly conserved across a broad range of retroviral envelope proteins. It is thought to participate in the formation of a labile disulfide bond possibly with the CX6CC motif present in the transmembrane protein. Isomerization of the intersubunit disulfide bond to an SU intrachain disulfide bond is thought to occur upon receptor recognition in order to allow membrane fusion. Low expression in skin and testis. No expression in several cell lines.

The protein localises to the virion. It localises to the cell membrane. In terms of biological role, retroviral envelope proteins mediate receptor recognition and membrane fusion during early infection. Endogenous envelope proteins may have kept, lost or modified their original function during evolution. This endogenous envelope protein has lost its original fusogenic properties but has immunosuppressive properties in vivo. Functionally, SU mediates receptor recognition. Its function is as follows. TM anchors the envelope heterodimer to the viral membrane through one transmembrane domain. The other hydrophobic domain, called fusion peptide, mediates fusion of the viral membrane with the target cell membrane. The protein is HERV-H_2q24.3 provirus ancestral Env polyprotein of Homo sapiens (Human).